A 372-amino-acid polypeptide reads, in one-letter code: Cytochrome b (372 aa).

A run of 4 helical transmembrane segments spans residues 25–45 (FGSMLLTCTALQTTTGFFLAI), 69–90 (WIMQNIHATGASMFFICIYIHI), 105–125 (WVSGTTLLVTLMATAFFGYVL), and 170–190 (FFALHFILPFIIISTSLIHVM). Heme b-binding residues include histidine 75 and histidine 89. Positions 174 and 188 each coordinate heme b. Position 193 (histidine 193) interacts with a ubiquinone. Transmembrane regions (helical) follow at residues 218 to 238 (YKDTLMLTTLLTLLFITTSFF), 280 to 300 (LGGTMALVMSIIILLTAPFTH), 312 to 332 (MAQVLFWTFIATFMLITWAAT), and 339 to 358 (FTTIGLSTSILYFSFFIINP).

Belongs to the cytochrome b family. As to quaternary structure, the cytochrome bc1 complex contains 3 respiratory subunits (MT-CYB, CYC1 and UQCRFS1), 2 core proteins (UQCRC1 and UQCRC2) and probably 6 low-molecular weight proteins. It depends on heme b as a cofactor.

The protein resides in the mitochondrion inner membrane. Component of the ubiquinol-cytochrome c reductase complex (complex III or cytochrome b-c1 complex) that is part of the mitochondrial respiratory chain. The b-c1 complex mediates electron transfer from ubiquinol to cytochrome c. Contributes to the generation of a proton gradient across the mitochondrial membrane that is then used for ATP synthesis. The sequence is that of Cytochrome b (MT-CYB) from Heterodon simus (Southern hognose snake).